A 296-amino-acid polypeptide reads, in one-letter code: HTH-type transcriptional activator AmpR (296 aa).

The region spanning 6 to 63 (LPLNALRAFEASARHLSFTRAAIELCVTQAAVSHQVKSLEERLGVALFKRLPRGLMLT) is the HTH lysR-type domain. Residues 23–42 (FTRAAIELCVTQAAVSHQVK) constitute a DNA-binding region (H-T-H motif). The segment at 83 to 296 (LLERFEGGHY…EMAAVEARGR (214 aa)) is includes the LysR substrate-binding / effector-binding domain, involved in binding to specific cell-wall-derived muropeptide products, some of which have signaling functions, leading to disparate responses such as antibiotic resistance, virulence, and host cell inflammation. Positions 91 to 289 (HYRDVLTVGA…AFRGWLLEMA (199 aa)) constitute a LysR substrate-binding domain.

The protein belongs to the LysR transcriptional regulatory family. As to quaternary structure, homodimer.

The protein resides in the cytoplasm. Its subcellular location is the membrane. Functionally, transcription regulator that plays a critical role in the expression of beta-lactamase AmpC, acting by positive regulation of the ampC gene. Has a wider role in the regulation of expression of genes involved in proteolysis, quorum sensing, and virulence. Acts by binding directly to the promoter region of the ampC gene. Probably does not regulate transcription of its own gene. This is HTH-type transcriptional activator AmpR (ampR) from Pseudomonas aeruginosa (strain ATCC 15692 / DSM 22644 / CIP 104116 / JCM 14847 / LMG 12228 / 1C / PRS 101 / PAO1).